Reading from the N-terminus, the 817-residue chain is Dynamin-related protein 5A (817 aa).

The segment covering 1–20 (MANSNTYLTTPTKTPSSRRN) has biased composition (polar residues). A disordered region spans residues 1–37 (MANSNTYLTTPTKTPSSRRNQQSQSKMQSHSKDPINA). In terms of domain architecture, Dynamin-type G spans 59 to 346 (KLPIPEIVAI…LQKRYKEAAP (288 aa)). Residues 69 to 76 (GGQSDGKS) are G1 motif. Residue 69–76 (GGQSDGKS) participates in GTP binding. Positions 95–97 (GTR) are G2 motif. A G3 motif region spans residues 175 to 178 (DTPG). GTP-binding positions include 175 to 179 (DTPGF) and 244 to 247 (SKFD). Residues 244-247 (SKFD) form a G4 motif region. The segment at 280–283 (LPKD) is G5 motif. 2 disordered regions span residues 405–425 (APEQ…IGSW) and 616–658 (LSDT…ETPS). Residues 618–629 (DTSRDEPMKDQE) are compositionally biased toward basic and acidic residues.

Belongs to the TRAFAC class dynamin-like GTPase superfamily. Dynamin/Fzo/YdjA family. As to expression, expressed in root and leaf meristems.

It localises to the cytoplasm. Its subcellular location is the cytoskeleton. The protein resides in the phragmoplast. Probable microtubule-associated force-producing protein that is targeted to the forming cell plate during cytokinesis. May play a role in cell division. This is Dynamin-related protein 5A (DRP5A) from Arabidopsis thaliana (Mouse-ear cress).